Reading from the N-terminus, the 87-residue chain is Precursor of CEP8 (87 aa).

Positions methionine 1–alanine 29 are cleaved as a signal peptide. Residues arginine 30–aspartate 72 constitute a propeptide that is removed on maturation. N-linked (GlcNAc...) asparagine glycosylation occurs at asparagine 41. The segment at asparagine 41–histidine 87 is disordered. The segment covering glycine 49–serine 59 has biased composition (gly residues). The segment covering aspartate 63–arginine 75 has biased composition (basic and acidic residues). A hydroxyproline mark is found at proline 76, proline 79, and proline 83.

The protein belongs to the C-terminally encoded plant signaling peptide (CEP) family. Interacts with CEP receptors (e.g. CEPR1 and CEPR2). The mature small signaling peptide is generated by proteolytic processing of the longer precursor. Expressed in lateral root primordia and in lateral roots excluding the meristem region. Also present in the aerial tissues, such as leaf petioles and the shoot apex region.

It localises to the secreted. The protein localises to the extracellular space. The protein resides in the apoplast. Functionally, extracellular signaling peptide that may regulate primary root growth rate and systemic nitrogen (N)-demand signaling. Mediates up-regulation of genes involved in N uptake and assimilation pathways. The protein is Precursor of CEP8 of Arabidopsis thaliana (Mouse-ear cress).